An 86-amino-acid chain; its full sequence is RNA-binding protein Hfq (86 aa).

A Sm domain is found at 9 to 68 (DPYLNTLRKERVPVSIYLVNGIKLQGQIESFDQFVILLKNTVSQMVYKHAISTVVPSRPV). The tract at residues 66 to 86 (RPVRLPSAGDSEQADAEPGNA) is disordered.

Belongs to the Hfq family. In terms of assembly, homohexamer.

Its function is as follows. RNA chaperone that binds small regulatory RNA (sRNAs) and mRNAs to facilitate mRNA translational regulation in response to envelope stress, environmental stress and changes in metabolite concentrations. Also binds with high specificity to tRNAs. The sequence is that of RNA-binding protein Hfq from Ectopseudomonas mendocina (strain ymp) (Pseudomonas mendocina).